The following is a 257-amino-acid chain: Receptor expression-enhancing protein 4 (257 aa).

2 helical membrane-spanning segments follow: residues 1–21 (MVSW…CPAY) and 42–62 (WIVF…ISWF). A phosphoserine mark is found at serine 152 and serine 194. The interval 183–257 (PIGYRAGGLQ…KKTVPSDVDS (75 aa)) is disordered. Threonine 196 is subject to Phosphothreonine. Serine 202 carries the phosphoserine modification. Position 250 is a phosphothreonine (threonine 250). Serine 253 bears the Phosphoserine mark.

This sequence belongs to the DP1 family. As to expression, expressed in circumvallate papillae and testis.

The protein localises to the endoplasmic reticulum membrane. Microtubule-binding protein required to ensure proper cell division and nuclear envelope reassembly by sequestering the endoplasmic reticulum away from chromosomes during mitosis. Probably acts by clearing the endoplasmic reticulum membrane from metaphase chromosomes. The sequence is that of Receptor expression-enhancing protein 4 (REEP4) from Homo sapiens (Human).